The sequence spans 80 residues: Beta-toxin KAaH1 (80 aa).

The N-terminal stretch at 1–22 (MMKLMLFSIIVILFSLIGSIHG) is a signal peptide. In terms of domain architecture, LCN-type CS-alpha/beta spans 25–80 (VPGNYPLDSSDDTYLCAPLGENPFCIKICRKHGVKYGYCYAFQCWCEYLEDKNVKI). 3 disulfide bridges follow: Cys-40–Cys-63, Cys-49–Cys-68, and Cys-53–Cys-70.

This sequence belongs to the long (3 C-C) scorpion toxin superfamily. Sodium/Potassium channel inhibitor family. As to expression, expressed by the venom gland.

The protein localises to the secreted. In terms of biological role, inhibits the vertebrate potassium channels Kv1.1/KCNA1 and Kv1.3/KCNA3 in vitro with an IC(50) of 5.3 nM and 50.0 nM respectively. The chain is Beta-toxin KAaH1 from Androctonus australis (Sahara scorpion).